A 227-amino-acid chain; its full sequence is Cytochrome c oxidase subunit 2 (227 aa).

Over 1–14 (MAYPFQLGLQDATS) the chain is Mitochondrial intermembrane. A helical transmembrane segment spans residues 15–45 (PIMEELMNFHDHTLMIVFLISTLVLYIISLM). At 46–59 (LTTKLTHTSTMDAQ) the chain is on the mitochondrial matrix side. Residues 60–87 (EVETIWTILPAVILILIALPSLRILYMM) form a helical membrane-spanning segment. Topologically, residues 88-227 (DEINNPALTV…YFENWSASMI (140 aa)) are mitochondrial intermembrane. Cu cation contacts are provided by H161, C196, E198, C200, H204, and M207. E198 is a Mg(2+) binding site. Y218 carries the post-translational modification Phosphotyrosine.

This sequence belongs to the cytochrome c oxidase subunit 2 family. As to quaternary structure, component of the cytochrome c oxidase (complex IV, CIV), a multisubunit enzyme composed of 14 subunits. The complex is composed of a catalytic core of 3 subunits MT-CO1, MT-CO2 and MT-CO3, encoded in the mitochondrial DNA, and 11 supernumerary subunits COX4I, COX5A, COX5B, COX6A, COX6B, COX6C, COX7A, COX7B, COX7C, COX8 and NDUFA4, which are encoded in the nuclear genome. The complex exists as a monomer or a dimer and forms supercomplexes (SCs) in the inner mitochondrial membrane with NADH-ubiquinone oxidoreductase (complex I, CI) and ubiquinol-cytochrome c oxidoreductase (cytochrome b-c1 complex, complex III, CIII), resulting in different assemblies (supercomplex SCI(1)III(2)IV(1) and megacomplex MCI(2)III(2)IV(2)). Found in a complex with TMEM177, COA6, COX18, COX20, SCO1 and SCO2. Interacts with TMEM177 in a COX20-dependent manner. Interacts with COX20. Interacts with COX16. Cu cation is required as a cofactor.

The protein resides in the mitochondrion inner membrane. It catalyses the reaction 4 Fe(II)-[cytochrome c] + O2 + 8 H(+)(in) = 4 Fe(III)-[cytochrome c] + 2 H2O + 4 H(+)(out). In terms of biological role, component of the cytochrome c oxidase, the last enzyme in the mitochondrial electron transport chain which drives oxidative phosphorylation. The respiratory chain contains 3 multisubunit complexes succinate dehydrogenase (complex II, CII), ubiquinol-cytochrome c oxidoreductase (cytochrome b-c1 complex, complex III, CIII) and cytochrome c oxidase (complex IV, CIV), that cooperate to transfer electrons derived from NADH and succinate to molecular oxygen, creating an electrochemical gradient over the inner membrane that drives transmembrane transport and the ATP synthase. Cytochrome c oxidase is the component of the respiratory chain that catalyzes the reduction of oxygen to water. Electrons originating from reduced cytochrome c in the intermembrane space (IMS) are transferred via the dinuclear copper A center (CU(A)) of subunit 2 and heme A of subunit 1 to the active site in subunit 1, a binuclear center (BNC) formed by heme A3 and copper B (CU(B)). The BNC reduces molecular oxygen to 2 water molecules using 4 electrons from cytochrome c in the IMS and 4 protons from the mitochondrial matrix. The sequence is that of Cytochrome c oxidase subunit 2 (MT-CO2) from Maxomys surifer (Indomalayan maxomys).